We begin with the raw amino-acid sequence, 1078 residues long: Zinc finger protein 827 (1078 aa).

Over residues 1-10 (MPRRKQEQPK) the composition is skewed to basic and acidic residues. The segment at 1 to 14 (MPRRKQEQPKRLPS) is mediates direct interaction with RBBP4. The tract at residues 1–76 (MPRRKQEQPK…PDTSLGSATP (76 aa)) is disordered. The RRK motif; mediates NuRD recruitment to telomeres motif lies at 3–5 (RRK). Polar residues-rich tracts occupy residues 33-42 (YGNSSETPSE) and 62-76 (EQSTSPDTSLGSATP). Glycyl lysine isopeptide (Lys-Gly) (interchain with G-Cter in SUMO2) cross-links involve residues lysine 175, lysine 215, and lysine 225. The tract at residues 307-341 (SLLPDDPLPLPSSEKKPEKVTPPPPPPPPTAQPPQ) is disordered. Positions 326–338 (VTPPPPPPPPTAQ) are enriched in pro residues. Residues lysine 357 and lysine 369 each participate in a glycyl lysine isopeptide (Lys-Gly) (interchain with G-Cter in SUMO2) cross-link. 3 C2H2-type zinc fingers span residues 371 to 393 (FQCPICGLVIKRKSYWKRHMVIH), 399 to 421 (HQCPLCPFRCARKDNLKSHMKVH), and 430 to 452 (FQCQLCPFTSSRHFSLKLHMRCH). Residues lysine 463, lysine 472, lysine 520, lysine 546, lysine 577, lysine 584, and lysine 594 each participate in a glycyl lysine isopeptide (Lys-Gly) (interchain with G-Cter in SUMO2) cross-link. Residues 466–490 (IPDPDVKGSPHLSDSGCLGQQREGG) are disordered. The interval 594–640 (KEEPKEEESLSMPLPRSSYVFSPEPEVSTPSVSEDPLTPQEGKGSVL) is disordered. The span at 613–627 (VFSPEPEVSTPSVSE) shows a compositional bias: low complexity. Residues lysine 636 and lysine 655 each participate in a glycyl lysine isopeptide (Lys-Gly) (interchain with G-Cter in SUMO2) cross-link. Lysine 670 is covalently cross-linked (Glycyl lysine isopeptide (Lys-Gly) (interchain with G-Cter in SUMO1); alternate). Lysine 670 is covalently cross-linked (Glycyl lysine isopeptide (Lys-Gly) (interchain with G-Cter in SUMO2); alternate). Residues lysine 701, lysine 707, lysine 739, lysine 775, and lysine 795 each participate in a glycyl lysine isopeptide (Lys-Gly) (interchain with G-Cter in SUMO2) cross-link. C2H2-type zinc fingers lie at residues 814 to 836 (FPCDVCGKVFGRQQTLSRHLSLH) and 842 to 864 (YKCHLCPYAAKCRANLNQHLTVH). Residues lysine 867 and lysine 888 each participate in a glycyl lysine isopeptide (Lys-Gly) (interchain with G-Cter in SUMO2) cross-link. C2H2-type zinc fingers lie at residues 894–916 (YSCHVCGFETELNVQFVSHMSLH) and 926–949 (ICCTACDFVTMEEAEIKTHIGTKH). The span at 945–957 (IGTKHTGDDRKTP) shows a compositional bias: basic and acidic residues. Residues 945–990 (IGTKHTGDDRKTPSESNSPSSSSLSTLSDSANGKDDSDSSQKNKGG) form a disordered region. Lysine 955 is covalently cross-linked (Glycyl lysine isopeptide (Lys-Gly) (interchain with G-Cter in SUMO2)). Over residues 958-974 (SESNSPSSSSLSTLSDS) the composition is skewed to low complexity. Basic and acidic residues predominate over residues 976-985 (NGKDDSDSSQ). Lysine 1011 participates in a covalent cross-link: Glycyl lysine isopeptide (Lys-Gly) (interchain with G-Cter in SUMO2). C2H2-type zinc fingers lie at residues 1016–1038 (FECVFCNFVCKTKNMFERHLQIH) and 1044–1066 (FECDVCHKFMKTPEQLLEHKKCH).

The protein belongs to the krueppel C2H2-type zinc-finger protein family. As to quaternary structure, part of a transcription inhibitory ribonucleoprotein complex composed at least of the circular RNA circZNF827, HNRNPK and HNRNPL. Interacts with the nucleosome remodeling and histone deacetylase/NuRD complex. Interacts with RBBP4; the interaction is direct and recruits RBBP4, a component of the NuRD complex, to telomeres.

It localises to the nucleus. Its subcellular location is the chromosome. The protein resides in the telomere. As part of a ribonucleoprotein complex composed at least of HNRNPK, HNRNPL and the circular RNA circZNF827 that nucleates the complex on chromatin, may negatively regulate the transcription of genes involved in neuronal differentiation. Could also recruit the nucleosome remodeling and histone deacetylase/NuRD complex to telomeric regions of chromosomes to regulate chromatin remodeling as part of telomere maintenance. This chain is Zinc finger protein 827 (Znf827), found in Mus musculus (Mouse).